Reading from the N-terminus, the 700-residue chain is Methionine synthase reductase (700 aa).

Positions 4 to 147 (FLLLYATQRG…VVEPWIDGLW (144 aa)) constitute a Flavodoxin-like domain. Residues 10-14 (TQRGQ) and 93-124 (LLGL…QHFY) each bind FMN. Residues 168–247 (TLAQASDAPL…SSLSIPAVSP (80 aa)) are hinge. Phosphoserine occurs at positions 173 and 190. The 263-residue stretch at 272–534 (DPIFQVPISK…PRATNSFHLP (263 aa)) folds into the FAD-binding FR-type domain. Residue K292 participates in NADP(+) binding. FAD-binding positions include 452-455 (RPYS) and 488-491 (GVCT). NADP(+) contacts are provided by residues 611–612 (SR), 626–628 (YVQ), and D661. W699 contributes to the FAD binding site.

In terms of assembly, forms a multiprotein complex with MMACHC, MMADHC and MTR. FAD serves as cofactor. FMN is required as a cofactor.

Its subcellular location is the cytoplasm. The enzyme catalyses 2 methylcob(III)alamin-[methionine synthase] + 2 S-adenosyl-L-homocysteine + NADP(+) + H(+) = 2 cob(II)alamin-[methionine synthase] + 2 S-adenosyl-L-methionine + NADPH. It carries out the reaction 2 cob(II)alamin + A + 2 H2O + 2 H(+) = 2 aquacob(III)alamin + AH2. Key enzyme in methionine and folate homeostasis responsible for the reactivation of methionine synthase (MTR/MS) activity by catalyzing the reductive methylation of MTR-bound cob(II)alamin. Cobalamin (vitamin B12) forms a complex with MTR to serve as an intermediary in methyl transfer reactions that cycles between MTR-bound methylcob(III)alamin and MTR bound-cob(I)alamin forms, and occasional oxidative escape of the cob(I)alamin intermediate during the catalytic cycle leads to the inactive cob(II)alamin species. The processing of cobalamin in the cytosol occurs in a multiprotein complex composed of at least MMACHC, MMADHC, MTRR and MTR which may contribute to shuttle safely and efficiently cobalamin towards MTR in order to produce methionine. Also necessary for the utilization of methyl groups from the folate cycle, thereby affecting transgenerational epigenetic inheritance. Also acts as a molecular chaperone for methionine synthase by stabilizing apoMTR and incorporating methylcob(III)alamin into apoMTR to form the holoenzyme. Also serves as an aquacob(III)alamin reductase by reducing aquacob(III)alamin to cob(II)alamin; this reduction leads to stimulation of the conversion of apoMTR and aquacob(III)alamin to MTR holoenzyme. This Rattus norvegicus (Rat) protein is Methionine synthase reductase (Mtrr).